We begin with the raw amino-acid sequence, 85 residues long: Beta-insect depressant toxin Lqh-dprIT3f (85 aa).

The N-terminal stretch at 1–21 (MKLLLLLTISASMLIEGLVNA) is a signal peptide. An LCN-type CS-alpha/beta domain is found at 22 to 82 (DGYIRGGDGC…EWDYETDTCG (61 aa)). 4 cysteine pairs are disulfide-bonded: C31–C81, C35–C56, C42–C63, and C46–C65. G82 carries the post-translational modification Glycine amide.

The protein belongs to the long (4 C-C) scorpion toxin superfamily. Sodium channel inhibitor family. Beta subfamily. As to expression, expressed by the venom gland.

It is found in the secreted. Its function is as follows. Depressant insect beta-toxins cause a transient contraction paralysis followed by a slow flaccid paralysis. They bind voltage-independently at site-4 of sodium channels (Nav) and block action potentials, primarily by depolarizing the axonal membrane and suppressing the sodium current. This depressant toxin is active only on insects. It is found in a relatively small amount in the venom. The chain is Beta-insect depressant toxin Lqh-dprIT3f from Leiurus hebraeus (Hebrew deathstalker scorpion).